Reading from the N-terminus, the 623-residue chain is Keratin, type I cytoskeletal 9 (623 aa).

Residues 1-13 (MSCRQFSSSYLSR) are compositionally biased toward low complexity. The interval 1 to 25 (MSCRQFSSSYLSRSGGGGGGGLGSG) is disordered. The tract at residues 1 to 152 (MSCRQFSSSY…GGDGGILTAN (152 aa)) is head. Phosphoserine occurs at positions 14 and 57. The segment covering 14–25 (SGGGGGGGLGSG) has biased composition (gly residues). Positions 153 to 188 (EKSTMQELNSRLASYLDKVQALEEANNDLENKIQDW) are coil 1A. Residues 153–465 (EKSTMQELNS…NLLEGGQEDF (313 aa)) form the IF rod domain. Positions 189 to 207 (YDKKGPAAIQKNYSPYYNT) are linker 1. The coil 1B stretch occupies residues 208–299 (IDDLKDQIVD…KNHKEEMSQL (92 aa)). The segment at 300–322 (TGQNSGDVNVEINVAPGKDLTKT) is linker 12. A coil 2 region spans residues 323-461 (LNDMRQEYEQ…ETYHNLLEGG (139 aa)). Disordered stretches follow at residues 462 to 496 (QEDF…SGGS) and 534 to 623 (YGGG…SSHS). Residues 462 to 623 (QEDFESSGAG…GGGSGKSSHS (162 aa)) are tail. The segment covering 471–496 (GKIGLGGRGGSGGSYGRGSRGGSGGS) has biased composition (gly residues).

The protein belongs to the intermediate filament family. Heterotetramer of two type I and two type II keratins. As to expression, expressed in the terminally differentiated epidermis of palms and soles.

Its function is as follows. May serve an important special function either in the mature palmar and plantar skin tissue or in the morphogenetic program of the formation of these tissues. Plays a role in keratin filament assembly. This Homo sapiens (Human) protein is Keratin, type I cytoskeletal 9 (KRT9).